The sequence spans 629 residues: Probable potassium transport system protein Kup 3 (629 aa).

12 helical membrane passes run 20–40 (LSLS…LYTF), 54–74 (VTTI…IASV), 106–126 (PFII…GTIT), 143–163 (PSLK…LFAI), 171–191 (IGKA…ILGA), 212–232 (FLFS…LCAT), 253–273 (WFGL…ALVL), 291–311 (FLLP…QAII), 343–363 (IYIG…IIGF), 372–392 (AYGI…FIAL), 400–420 (IITS…FFAA), and 425–445 (FING…MMYI).

It belongs to the HAK/KUP transporter (TC 2.A.72) family.

It localises to the cell inner membrane. It catalyses the reaction K(+)(in) + H(+)(in) = K(+)(out) + H(+)(out). Functionally, transport of potassium into the cell. Likely operates as a K(+):H(+) symporter. The sequence is that of Probable potassium transport system protein Kup 3 from Legionella pneumophila (strain Paris).